A 365-amino-acid polypeptide reads, in one-letter code: tRNA 2-selenouridine synthase (365 aa).

The region spanning 12–136 is the Rhodanese domain; it reads FLDDVPMMDM…LRTFLLDTTQ (125 aa). The S-selanylcysteine intermediate role is filled by Cys95.

This sequence belongs to the SelU family. Monomer.

It carries out the reaction 5-methylaminomethyl-2-thiouridine(34) in tRNA + selenophosphate + (2E)-geranyl diphosphate + H2O + H(+) = 5-methylaminomethyl-2-selenouridine(34) in tRNA + (2E)-thiogeraniol + phosphate + diphosphate. The enzyme catalyses 5-methylaminomethyl-2-thiouridine(34) in tRNA + (2E)-geranyl diphosphate = 5-methylaminomethyl-S-(2E)-geranyl-thiouridine(34) in tRNA + diphosphate. It catalyses the reaction 5-methylaminomethyl-S-(2E)-geranyl-thiouridine(34) in tRNA + selenophosphate + H(+) = 5-methylaminomethyl-2-(Se-phospho)selenouridine(34) in tRNA + (2E)-thiogeraniol. The catalysed reaction is 5-methylaminomethyl-2-(Se-phospho)selenouridine(34) in tRNA + H2O = 5-methylaminomethyl-2-selenouridine(34) in tRNA + phosphate. Functionally, involved in the post-transcriptional modification of the uridine at the wobble position (U34) of tRNA(Lys), tRNA(Glu) and tRNA(Gln). Catalyzes the conversion of 2-thiouridine (S2U-RNA) to 2-selenouridine (Se2U-RNA). Acts in a two-step process involving geranylation of 2-thiouridine (S2U) to S-geranyl-2-thiouridine (geS2U) and subsequent selenation of the latter derivative to 2-selenouridine (Se2U) in the tRNA chain. In Pseudomonas putida (strain W619), this protein is tRNA 2-selenouridine synthase.